Here is a 787-residue protein sequence, read N- to C-terminus: MDASLEKIADPTLAEMGKNLKEAMRMLEKSPRRTEEENGKKPVSEDIPGPLQGSGQDMVSILQLVQNLMHGDEDEEPQSTRIQNIGEQGHMALLGHSLGAYISTLDKEKLRKLTTRILSDTTLWLRRIFRYENGCAYFHEEEREGLAKICRLAIHSRYEDFVVDGFNVLYNKKPVIYLSAAARPGLGQYLCNQLGLPFPCLCRVPCNTMFGSQHQMDVAFLEKLIKDDVERGRLPLLLVANAGTAAVGHTDKIGRLKELCEQYGIWLHVEGVNLATLALGYVSSSVLAATKCDSMTLTPGLWLGLPAVPAVTLYKHDDPALTLVAGLTSNKPADKLRALPLWLSLQYLGLDGIVERIKHACHLSQRLQESLKKVDHIKILVEDELSSPVVVFRFFQELPASDSAFKAVPVSNIAPAAVGRERHSCDALNRWLGEQLKQLVPQCGLTVIDLEVDGTCVRFSPLMTAEGLGTRGEDVDQLITCIQSKLPVLTCTLQLREEFKQEVEGTAGLLYVDDPNWPGIGVVRYEHANDDDTSLKSDPEGEKIHTGLLKKLNELESDLTFKIGPEYKSMKSCIYIGMASDDVDVSELVETIAVTAREIEENSRLLENMTEVVRKGIQEAQVQLQKANEERLLEEGVLRQIPVVGSVLNWFSPVQASQKGRSFNLTAGSLESTEYTYVHKVQGTGVTPPPTPLGTRSKQRLPGQKPFKRSLRGSDAVSETSSVSHIEDLEKVEQLSSGLEHDNLEAHSPEQPPRATDLTARQTEALQNQAQHQEDDHSQVEELERLR.

The span at 26–44 (MLEKSPRRTEEENGKKPVS) shows a compositional bias: basic and acidic residues. Residues 26-52 (MLEKSPRRTEEENGKKPVSEDIPGPLQ) form a disordered region. Ser652 carries the phosphoserine modification. The tract at residues 682-787 (QGTGVTPPPT…SQVEELERLR (106 aa)) is disordered. A phosphothreonine mark is found at Thr687 and Thr691. Residues Ser710, Ser718, Ser722, and Ser748 each carry the phosphoserine modification. Over residues 725–748 (HIEDLEKVEQLSSGLEHDNLEAHS) the composition is skewed to basic and acidic residues. Residues 759-771 (TARQTEALQNQAQ) are compositionally biased toward polar residues. Residues 772–787 (HQEDDHSQVEELERLR) show a composition bias toward basic and acidic residues. Ser778 carries the post-translational modification Phosphoserine.

This sequence belongs to the group II decarboxylase family. Requires pyridoxal 5'-phosphate as cofactor.

The protein is Pyridoxal-dependent decarboxylase domain-containing protein 1 (Pdxdc1) of Mus musculus (Mouse).